Reading from the N-terminus, the 152-residue chain is Methylglyoxal synthase (152 aa).

Positions 1-152 (MELTTRTIAA…YDRYLQQRLK (152 aa)) constitute an MGS-like domain. Residues H19, K23, 45–48 (TGTT), and 65–66 (SG) contribute to the substrate site. D71 serves as the catalytic Proton donor/acceptor. H98 serves as a coordination point for substrate.

The protein belongs to the methylglyoxal synthase family.

It carries out the reaction dihydroxyacetone phosphate = methylglyoxal + phosphate. Its function is as follows. Catalyzes the formation of methylglyoxal from dihydroxyacetone phosphate. This chain is Methylglyoxal synthase, found in Yersinia enterocolitica serotype O:8 / biotype 1B (strain NCTC 13174 / 8081).